The sequence spans 544 residues: Aspartokinase 2, chloroplastic (544 aa).

Residues Met1–Cys84 constitute a chloroplast transit peptide. ATP is bound by residues Lys87, Gly90, and Ser119. Glu203 contacts substrate. 2 ACT domains span residues Ile401 to Ile479 and Ser481 to Pro544.

Belongs to the aspartokinase family. In terms of tissue distribution, expressed in stems, leaves, floral organs and young seedlings.

The protein localises to the plastid. Its subcellular location is the chloroplast. The enzyme catalyses L-aspartate + ATP = 4-phospho-L-aspartate + ADP. Its pathway is amino-acid biosynthesis; L-lysine biosynthesis via DAP pathway; (S)-tetrahydrodipicolinate from L-aspartate: step 1/4. The protein operates within amino-acid biosynthesis; L-methionine biosynthesis via de novo pathway; L-homoserine from L-aspartate: step 1/3. It functions in the pathway amino-acid biosynthesis; L-threonine biosynthesis; L-threonine from L-aspartate: step 1/5. Its activity is regulated as follows. Allosterically inhibited by lysine, but not by S-adenosyl-L-methionine (SAM). K(0.5) for lysine in the presence of physiological concentrations of substrates is 12.5 uM. No inhibition by threonine or leucine and no activation or inhibition by alanine, cysteine, isoleucine, serine, valine, methionine, glutamine, asparagine, glutamic acid or arginine. Functionally, involved in the first step of essential amino acids lysine, threonine, methionine and isoleucine synthesis via the aspartate-family pathway. The protein is Aspartokinase 2, chloroplastic (AK2) of Arabidopsis thaliana (Mouse-ear cress).